A 1357-amino-acid chain; its full sequence is Ubiquitin carboxyl-terminal hydrolase 19 (1357 aa).

3 disordered regions span residues 1 to 52 (MSAG…PTKD), 162 to 239 (LSPI…SDSA), and 275 to 296 (VSPR…EKDD). Topologically, residues 1–1330 (MSAGTSATGP…TTSDEGCLRY (1330 aa)) are cytoplasmic. Basic and acidic residues-rich tracts occupy residues 28–52 (DRAN…PTKD) and 171–182 (SEPRRAKQEARN). The 90-residue stretch at 51–140 (KDELLLDWRQ…VPLLTWPSLL (90 aa)) folds into the CS 1 domain. Low complexity predominate over residues 194–206 (SGASPGAQAGPSA). S221 and S283 each carry phosphoserine. The CS 2 domain maps to 321-423 (LAFVKNDSYE…RQSQRWGGLE (103 aa)). Residues 432 to 479 (AKVAVPTGPTPLDSTPPGGGPLPLTGQEEARAVEKEKPKARSEDSGLD) form a disordered region. Residues 437–457 (PTGPTPLDSTPPGGGPLPLTG) show a composition bias toward low complexity. Residues 459-475 (EEARAVEKEKPKARSED) are compositionally biased toward basic and acidic residues. Residues 536-1253 (TGLVNLGNTC…YAYVLFYRRR (718 aa)) form the USP domain. C545 (nucleophile) is an active-site residue. C830, C833, C847, C850, C856, C860, H868, and C872 together coordinate Zn(2+). The segment at 830–872 (CAACQRKQQSEDEKLKRCTRCYRVGYCNQFCQKTHWPDHKGLC) adopts an MYND-type zinc-finger fold. Residues 962-981 (DTGAHRMWPPADRGPVPSTS) are disordered. H1204 acts as the Proton acceptor in catalysis. Residues 1259–1271 (RPPRAAHAEHHPD) are compositionally biased toward basic and acidic residues. 2 disordered regions span residues 1259–1278 (RPPR…AAEA) and 1292–1320 (AEEE…PRGP). A helical transmembrane segment spans residues 1331 to 1351 (FVLGTVAALVALVLNVFYPLV). Residues 1352–1357 (SQSRWR) lie on the Lumenal side of the membrane.

As to quaternary structure, interacts with RNF123. Interacts with BIRC2/c-IAP1, BIRC3/c-IAP2 and XIAP/BIRC4. Interacts with HIF1A (via N-terminus). In terms of tissue distribution, expressed in testis, heart, kidney and skeletal muscle. Low levels of expression are detectable in all other tissues screened.

It localises to the endoplasmic reticulum membrane. The enzyme catalyses Thiol-dependent hydrolysis of ester, thioester, amide, peptide and isopeptide bonds formed by the C-terminal Gly of ubiquitin (a 76-residue protein attached to proteins as an intracellular targeting signal).. Deubiquitinating enzyme that regulates the degradation of various proteins by removing ubiquitin moieties, thereby preventing their proteasomal degradation. Stabilizes RNF123, which promotes CDKN1B degradation and contributes to cell proliferation. Decreases the levels of ubiquitinated proteins during skeletal muscle formation and acts to repress myogenesis. Modulates transcription of major myofibrillar proteins. Also involved in turnover of endoplasmic-reticulum-associated degradation (ERAD) substrates. Mechanistically, deubiquitinates and thereby stabilizes several E3 ligases involved in the ERAD pathway including SYVN1 or MARCHF6. Regulates the stability of other E3 ligases including BIRC2/c-IAP1 and BIRC3/c-IAP2 by preventing their ubiquitination. Required for cells to mount an appropriate response to hypoxia by rescuing HIF1A from degradation in a non-catalytic manner and by mediating the deubiquitination of FUNDC1. Attenuates mitochondrial damage and ferroptosis by targeting and stabilizing NADPH oxidase 4/NOX4. Negatively regulates TNF-alpha- and IL-1beta-triggered NF-kappa-B activation by hydrolyzing 'Lys-27'- and 'Lys-63'-linked polyubiquitin chains from MAP3K7. Modulates also the protein level and aggregation of polyQ-expanded huntingtin/HTT through HSP90AA1. The chain is Ubiquitin carboxyl-terminal hydrolase 19 (Usp19) from Rattus norvegicus (Rat).